The following is a 608-amino-acid chain: Phosphogluconate dehydratase (608 aa).

Residues Cys154 and Cys221 each contribute to the [4Fe-4S] cluster site.

It belongs to the IlvD/Edd family. It depends on [4Fe-4S] cluster as a cofactor.

The enzyme catalyses 6-phospho-D-gluconate = 2-dehydro-3-deoxy-6-phospho-D-gluconate + H2O. Its pathway is carbohydrate metabolism; Entner-Doudoroff pathway. Catalyzes the dehydration of 6-phospho-D-gluconate to 2-dehydro-3-deoxy-6-phospho-D-gluconate. In Helicobacter pylori (strain J99 / ATCC 700824) (Campylobacter pylori J99), this protein is Phosphogluconate dehydratase.